A 229-amino-acid polypeptide reads, in one-letter code: Cytidylate kinase (229 aa).

Position 12 to 20 (12 to 20 (GPSGAGKGT)) interacts with ATP.

The protein belongs to the cytidylate kinase family. Type 1 subfamily.

It localises to the cytoplasm. It carries out the reaction CMP + ATP = CDP + ADP. It catalyses the reaction dCMP + ATP = dCDP + ADP. This is Cytidylate kinase from Shewanella frigidimarina (strain NCIMB 400).